A 320-amino-acid chain; its full sequence is Transcription termination/antitermination protein NusG (320 aa).

The protein belongs to the NusG family.

Participates in transcription elongation, termination and antitermination. This Mycoplasma pneumoniae (strain ATCC 29342 / M129 / Subtype 1) (Mycoplasmoides pneumoniae) protein is Transcription termination/antitermination protein NusG.